The chain runs to 245 residues: Biosynthetic peptidoglycan transglycosylase (245 aa).

Residues 19-41 (CLRWVLAAPLLFAAASVLQVLFL) form a helical membrane-spanning segment.

It belongs to the glycosyltransferase 51 family.

It localises to the cell inner membrane. The catalysed reaction is [GlcNAc-(1-&gt;4)-Mur2Ac(oyl-L-Ala-gamma-D-Glu-L-Lys-D-Ala-D-Ala)](n)-di-trans,octa-cis-undecaprenyl diphosphate + beta-D-GlcNAc-(1-&gt;4)-Mur2Ac(oyl-L-Ala-gamma-D-Glu-L-Lys-D-Ala-D-Ala)-di-trans,octa-cis-undecaprenyl diphosphate = [GlcNAc-(1-&gt;4)-Mur2Ac(oyl-L-Ala-gamma-D-Glu-L-Lys-D-Ala-D-Ala)](n+1)-di-trans,octa-cis-undecaprenyl diphosphate + di-trans,octa-cis-undecaprenyl diphosphate + H(+). It functions in the pathway cell wall biogenesis; peptidoglycan biosynthesis. Its function is as follows. Peptidoglycan polymerase that catalyzes glycan chain elongation from lipid-linked precursors. The protein is Biosynthetic peptidoglycan transglycosylase of Xanthomonas oryzae pv. oryzae (strain KACC10331 / KXO85).